The primary structure comprises 183 residues: Adenine phosphoribosyltransferase (183 aa).

This sequence belongs to the purine/pyrimidine phosphoribosyltransferase family. As to quaternary structure, homodimer.

It localises to the cytoplasm. The catalysed reaction is AMP + diphosphate = 5-phospho-alpha-D-ribose 1-diphosphate + adenine. It participates in purine metabolism; AMP biosynthesis via salvage pathway; AMP from adenine: step 1/1. Functionally, catalyzes a salvage reaction resulting in the formation of AMP, that is energically less costly than de novo synthesis. The protein is Adenine phosphoribosyltransferase of Corynebacterium kroppenstedtii (strain DSM 44385 / JCM 11950 / CIP 105744 / CCUG 35717).